The chain runs to 686 residues: Band 4.1-like protein 4A (686 aa).

The 289-residue stretch at Phe-11 to Asp-299 folds into the FERM domain. A Phosphoserine modification is found at Ser-304. 2 stretches are compositionally biased toward polar residues: residues Asp-332–Arg-346 and Ala-357–Thr-382. Positions Asp-332 to Pro-669 are disordered. Phosphoserine occurs at positions 389, 393, and 402. 2 stretches are compositionally biased toward polar residues: residues Gly-418–Ser-428 and Arg-442–Leu-455. Residues Arg-479–Glu-489 show a composition bias toward low complexity. 2 stretches are compositionally biased toward basic and acidic residues: residues Val-518–Gln-527 and Gln-547–Val-561. Residues Ile-588–Arg-601 show a composition bias toward basic residues. A compositionally biased stretch (basic and acidic residues) spans Gly-648–Ser-658.

In terms of tissue distribution, brain, heart, lung, liver and spleen. Not detected in thymus and kidney.

The protein localises to the cytoplasm. It is found in the cytoskeleton. In Mus musculus (Mouse), this protein is Band 4.1-like protein 4A.